A 62-amino-acid polypeptide reads, in one-letter code: Sperm protamine P1 (62 aa).

The interval methionine 1–tyrosine 62 is disordered.

Belongs to the protamine P1 family. In terms of tissue distribution, testis.

It localises to the nucleus. The protein resides in the chromosome. Protamines substitute for histones in the chromatin of sperm during the haploid phase of spermatogenesis. They compact sperm DNA into a highly condensed, stable and inactive complex. This chain is Sperm protamine P1 (PRM1), found in Wallabia bicolor (Swamp wallaby).